The primary structure comprises 207 residues: Interleukin-6 (207 aa).

Residues 1–20 form the signal peptide; the sequence is MNSLSTSAFSLGLLLVMATA. A disulfide bridge links cysteine 67 with cysteine 73. The residue at position 76 (serine 76) is a Phosphoserine. An intrachain disulfide couples cysteine 96 to cysteine 106.

It belongs to the IL-6 superfamily. Component of a hexamer of two molecules each of IL6, IL6R and IL6ST; first binds to IL6R to associate with the signaling subunit IL6ST. Interacts with IL6R (via the N-terminal ectodomain); this interaction may be affected by IL6R-binding with SORL1, hence decreasing IL6 cis signaling. Interacts with SORL1 (via the N-terminal ectodomain); this interaction leads to IL6 internalization and lysosomal degradation. May form a trimeric complex with the soluble SORL1 ectodomain and soluble IL6R receptor; this interaction might stabilize circulating IL6, hence promoting IL6 trans signaling.

The protein localises to the secreted. Its function is as follows. Cytokine with a wide variety of biological functions in immunity, tissue regeneration, and metabolism. Binds to IL6R, then the complex associates to the signaling subunit IL6ST/gp130 to trigger the intracellular IL6-signaling pathway. The interaction with the membrane-bound IL6R and IL6ST stimulates 'classic signaling', whereas the binding of IL6 and soluble IL6R to IL6ST stimulates 'trans-signaling'. Alternatively, 'cluster signaling' occurs when membrane-bound IL6:IL6R complexes on transmitter cells activate IL6ST receptors on neighboring receiver cells. Functionally, IL6 is a potent inducer of the acute phase response. Rapid production of IL6 contributes to host defense during infection and tissue injury, but excessive IL6 synthesis is involved in disease pathology. In the innate immune response, is synthesized by myeloid cells, such as macrophages and dendritic cells, upon recognition of pathogens through toll-like receptors (TLRs) at the site of infection or tissue injury. In the adaptive immune response, is required for the differentiation of B cells into immunoglobulin-secreting cells. Plays a major role in the differentiation of CD4(+) T cell subsets. Essential factor for the development of T follicular helper (Tfh) cells that are required for the induction of germinal-center formation. Required to drive naive CD4(+) T cells to the Th17 lineage. Also required for proliferation of myeloma cells and the survival of plasmablast cells. In terms of biological role, acts as an essential factor in bone homeostasis and on vessels directly or indirectly by induction of VEGF, resulting in increased angiogenesis activity and vascular permeability. Induces, through 'trans-signaling' and synergistically with IL1B and TNF, the production of VEGF. Involved in metabolic controls, is discharged into the bloodstream after muscle contraction increasing lipolysis and improving insulin resistance. 'Trans-signaling' in central nervous system also regulates energy and glucose homeostasis. Mediates, through GLP-1, crosstalk between insulin-sensitive tissues, intestinal L cells and pancreatic islets to adapt to changes in insulin demand. Also acts as a myokine. Plays a protective role during liver injury, being required for maintenance of tissue regeneration. Also has a pivotal role in iron metabolism by regulating HAMP/hepcidin expression upon inflammation or bacterial infection. Through activation of IL6ST-YAP-NOTCH pathway, induces inflammation-induced epithelial regeneration. The protein is Interleukin-6 (IL6) of Canis lupus familiaris (Dog).